Here is a 461-residue protein sequence, read N- to C-terminus: Porin AaxA (461 aa).

A signal peptide spans 1–22 (MSFRSVLLTALLSLSFTTTMQA).

Belongs to the OprB family.

The protein resides in the cell outer membrane. In terms of biological role, facilitates L-arginine uptake, as part of the AaxABC system. The arginine uptake by the bacterium in the macrophage may be a virulence factor against the host innate immune response. This is Porin AaxA (aaxA) from Chlamydia trachomatis serovar D (strain ATCC VR-885 / DSM 19411 / UW-3/Cx).